The chain runs to 294 residues: 4-hydroxy-tetrahydrodipicolinate synthase (294 aa).

Position 45 (Thr45) interacts with pyruvate. Residue Tyr133 is the Proton donor/acceptor of the active site. Lys162 acts as the Schiff-base intermediate with substrate in catalysis. Ile204 serves as a coordination point for pyruvate.

The protein belongs to the DapA family. Homotetramer; dimer of dimers.

It localises to the cytoplasm. The catalysed reaction is L-aspartate 4-semialdehyde + pyruvate = (2S,4S)-4-hydroxy-2,3,4,5-tetrahydrodipicolinate + H2O + H(+). It functions in the pathway amino-acid biosynthesis; L-lysine biosynthesis via DAP pathway; (S)-tetrahydrodipicolinate from L-aspartate: step 3/4. Functionally, catalyzes the condensation of (S)-aspartate-beta-semialdehyde [(S)-ASA] and pyruvate to 4-hydroxy-tetrahydrodipicolinate (HTPA). In Bartonella henselae (strain ATCC 49882 / DSM 28221 / CCUG 30454 / Houston 1) (Rochalimaea henselae), this protein is 4-hydroxy-tetrahydrodipicolinate synthase.